Here is a 163-residue protein sequence, read N- to C-terminus: Large ribosomal subunit protein uL10 (163 aa).

It belongs to the universal ribosomal protein uL10 family. In terms of assembly, part of the ribosomal stalk of the 50S ribosomal subunit. The N-terminus interacts with L11 and the large rRNA to form the base of the stalk. The C-terminus forms an elongated spine to which L12 dimers bind in a sequential fashion forming a multimeric L10(L12)X complex.

In terms of biological role, forms part of the ribosomal stalk, playing a central role in the interaction of the ribosome with GTP-bound translation factors. This chain is Large ribosomal subunit protein uL10, found in Mannheimia succiniciproducens (strain KCTC 0769BP / MBEL55E).